Consider the following 336-residue polypeptide: Methionine synthase (336 aa).

The Zn(2+) site is built by His210, Cys212, Glu234, and Cys294.

Belongs to the archaeal MetE family. It depends on Zn(2+) as a cofactor.

It participates in amino-acid biosynthesis; L-methionine biosynthesis via de novo pathway. Functionally, catalyzes the transfer of a methyl group to L-homocysteine resulting in methionine formation. The physiological methyl donor is unknown. In Thermococcus kodakarensis (strain ATCC BAA-918 / JCM 12380 / KOD1) (Pyrococcus kodakaraensis (strain KOD1)), this protein is Methionine synthase.